The sequence spans 1221 residues: METQPEVPEVPLRPFKLAHQVVSLTGISFERRSIIGVVELTIVPNSENLRLIRLNAKQLRIYSVVLNDVCQADFTYFDPFQNICYKEHKSRALEVYSKHHLTAAQYTDPDVNNGELLIQVPPEGYSMIQEGQGLRIRIEFSLENPKCGVHFVIPPASTDEETQMNSSHMFTNCYENSSRLWFPCVDSFADPCTWRLEFTVDKNMTAVSCGELLEVIMTPDLRKKTFHYSVSTPVCAPNIALAVGQFEIYVDPHMHEVTHFCLPGLLPLLKNTVRYLHEAFEFYEETLSTRYPFSCYKQVFVDELDTDISAYATMSIASVNLLHSIAIIDQTYISRTFMSRAVAEQFFGCFITSHHWSDTWLAKGIAEYLCGLYSRKCFGNNEYRAWVQSELARVVRYEEQYGGIILDCSQPPAPLPVSGTNQSAASSKQQEIVHYFPIKSLHTVSPKYVEAMRRKAHFVIRMLENRIGQELLIQVFNKQLALASSAATTKIGAGLWSQLLISTNIFIKAIFTVTGKDMSVFMDQWVRTGGHAKFSLTSVFNRKRNTIELEIRQDYVNQRGIRKYNGPLMVQLQELDGTFKHTLQIESTLVKSDITCHSKSRRNKKKKIPLCTGEEVDMDLSAMDDSPVLWIRLDPEMILLRDLIIEQPDFQWQYQLRHERDVTAQFQAIQALQKYPTNATRLALTDTIESERCFYQVRCEAAHSLTKVANQMVASWSGPPAMLNIFRKFFGSFSAPHIIKLNNFSNFQLYFLQKAIPVAMAGLRTSHGICPPEVMRFLFDLFKYNENSRNHYTDAYYRAALVEALGETLTPVVSVAIHGTQITTDSLSTDAKLVLDEVTRLLNMEKHLPSYKYMVSVSCLKVIRKLQKFGHLPSLPHIYRSYAEYGIYLDLRIAAMECLVDFVKVDGRSEDLEHLITLLETDPDPAARHALAQLLIDNPPFTRESRSRLDKPNLVDRLWFSINRLPYDTKLRCDIVDLYYALYGTKRPNCLQAGENQSFYKDLMKDNNSSVGSVTGSFKKTSDSKSHLPTPTNTLDNEPQERQKPAMVTIKRTATEAFEVGDEIIKLERSEEITVLDEPVNVQAYDSETKVNALQADEEARDTHQAAKRLKNEMYAEDDNSSTMLDVGDSTRYESSHEEGKLKSGDGGLKKKKKKEKKKHKHKHKHRHSKDKDKDKDKERKDKDKRDPHISRLQARETATPDTLSSEDSSNSNSLPPMNLN.

Residues 845–1213 are binds to Tbp and Taf1; it reads EKHLPSYKYM…LSSEDSSNSN (369 aa). 2 disordered regions span residues 1011 to 1044 and 1111 to 1221; these read VGSV…ERQK and KNEM…MNLN. Over residues 1027 to 1037 the composition is skewed to polar residues; the sequence is HLPTPTNTLDN. A compositionally biased stretch (basic and acidic residues) spans 1129-1144; it reads DSTRYESSHEEGKLKS. Phosphoserine is present on residues S1135 and S1136. Residues 1138-1183 are highly charged; the sequence is EEGKLKSGDGGLKKKKKKEKKKHKHKHKHRHSKDKDKDKDKERKDK. The segment covering 1150–1169 has biased composition (basic residues); sequence KKKKKKEKKKHKHKHKHRHS. Over residues 1170-1190 the composition is skewed to basic and acidic residues; it reads KDKDKDKDKERKDKDKRDPHI. The span at 1206–1221 shows a compositional bias: low complexity; that stretch reads SEDSSNSNSLPPMNLN.

It belongs to the TAF2 family. In terms of assembly, belongs to the TFIID complex which is composed of TATA binding protein (Tbp) and a number of TBP-associated factors (TAFs). Interacts with Tbp, Taf1, Taf11 and Taf12.

Its subcellular location is the nucleus. Functionally, TFIID is a multimeric protein complex that plays a central role in mediating promoter responses to various activators and repressors. An essential subunit binds to core promoter DNA. In Drosophila melanogaster (Fruit fly), this protein is Transcription initiation factor TFIID subunit 2 (Taf2).